The following is a 274-amino-acid chain: Proteasome subunit beta (274 aa).

The propeptide at 1–52 (MPDPTGVAGRLPAVFMTPGTSSFTDFLSVAAPDLLPGARGPLPAPVTDAAHG) is removed in mature form; by autocatalysis. Thr53 serves as the catalytic Nucleophile.

The protein belongs to the peptidase T1B family. In terms of assembly, the 20S proteasome core is composed of 14 alpha and 14 beta subunits that assemble into four stacked heptameric rings, resulting in a barrel-shaped structure. The two inner rings, each composed of seven catalytic beta subunits, are sandwiched by two outer rings, each composed of seven alpha subunits. The catalytic chamber with the active sites is on the inside of the barrel. Has a gated structure, the ends of the cylinder being occluded by the N-termini of the alpha-subunits. Is capped by the proteasome-associated ATPase, ARC.

It is found in the cytoplasm. It carries out the reaction Cleavage of peptide bonds with very broad specificity.. Its pathway is protein degradation; proteasomal Pup-dependent pathway. Its activity is regulated as follows. The formation of the proteasomal ATPase ARC-20S proteasome complex, likely via the docking of the C-termini of ARC into the intersubunit pockets in the alpha-rings, may trigger opening of the gate for substrate entry. Interconversion between the open-gate and close-gate conformations leads to a dynamic regulation of the 20S proteasome proteolysis activity. In terms of biological role, component of the proteasome core, a large protease complex with broad specificity involved in protein degradation. The polypeptide is Proteasome subunit beta (Parafrankia sp. (strain EAN1pec)).